Reading from the N-terminus, the 6298-residue chain is Adhesion G-protein coupled receptor V1 (6298 aa).

Positions 1–28 are cleaved as a signal peptide; it reads MSVTSEPGMISSFLLVYLSTLFISFVFG. Calx-beta domains are found at residues 29–116, 132–236, 251–362, 389–489, 646–746, 764–862, 877–980, 994–1094, 1108–1208, 1440–1540, 1562–1662, 1706–1805, 1846–1948, 1962–2075, 2103–2202, 2218–2320, 2437–2537, 2576–2672, 2687–2786, 2810–2921, 2945–3044, and 3067–3167; these read EAEI…FHLT, ASVT…IQLR, VEII…IMLL, YGVL…LTIL, PAIA…TLSL, DLII…VILS, VNIT…IILL, ASLR…IVLF, ATVI…LRLV, AMPR…FLLK, QKSD…VTLV, TGLP…VELL, ILVT…VSIL, TLTI…IELF, HLVI…VQLL, VITI…VQLA, TLCL…FLIS, FIIY…VRLG, VTVN…VVLY, LTVE…VNLT, QIVI…LLLT, and DGPG…VCTL. Residues 29-5901 lie on the Extracellular side of the membrane; it reads EAEIRFTGQT…TDNSSSYNEA (5873 aa). EAR repeat units follow at residues 3251–3292, 3293–3341, 3344–3389, 3391–3435, 3437–3484, and 3488–3530; these read VFSI…RWQG, TFVP…MLTA, RLVL…RWNG, NFAW…TWSG, QFIN…VWEM, and SLRY…CWNS. Calx-beta domains follow at residues 3581-3622, 3636-3736, 3772-3872, 3919-4003, 4017-4120, 4135-4235, 4251-4351, 4384-4484, 4507-4607, 4628-4728, 4989-5089, 5281-5325, and 5361-5461; these read QSDF…RVQL, SVRV…VVTL, GAVR…VTIA, GGVI…ISLV, VNVV…IELT, SVII…EFQL, ARIT…LAIT, RIII…ILLI, SPFG…IVQL, KFGD…AVQL, TTAE…INLT, AVEE…YVFL, and IGFS…FVEL. In terms of domain architecture, GAIN-B spans 5740–5896; sequence SILALHWNPQ…AVYAQTDNSS (157 aa). 2 disulfide bridges follow: Cys-5849-Cys-5878 and Cys-5866-Cys-5880. Residues 5849-5896 are GPS; that stretch reads CLLWNQAAASWLSDSQFCKVVEDASDYVECACSHMSVYAVYAQTDNSS. The helical transmembrane segment at 5902 to 5922 threads the bilayer; it reads FFSAGLICISGLCLAVVSHMF. The Cytoplasmic segment spans residues 5923–5932; it reads CARHSMFAAK. A helical membrane pass occupies residues 5933–5953; it reads LLTHMMVASLGTQILFLASAY. Residues 5954–5973 lie on the Extracellular side of the membrane; that stretch reads ASPHLSEESCSAVAAVAHYL. A helical transmembrane segment spans residues 5974–5994; that stretch reads YLCQFSWMLIQSVNFWYVLVV. Residues 5995–6003 are Cytoplasmic-facing; sequence SDEHTERRC. Residues 6004 to 6024 form a helical membrane-spanning segment; sequence LLFCLLSWGLPSFVVILLILI. Residues 6025-6052 lie on the Extracellular side of the membrane; it reads LRGIYHRSMPQIYGLIHGDLCFIPNIYA. The chain crosses the membrane as a helical span at residues 6053–6073; that stretch reads ALFTAALVPLMCLVVVFVVFI. Topologically, residues 6074–6097 are cytoplasmic; that stretch reads HAYQLKPQWKGYDDVFRGRTNAAE. Residues 6098 to 6118 traverse the membrane as a helical segment; sequence IPLILYLFALISMTWLWGGLH. The Extracellular portion of the chain corresponds to 6119 to 6126; that stretch reads MAYGHFWM. A helical membrane pass occupies residues 6127–6147; the sequence is LVLFVIFNSLQGLYVFVVYFI. The Cytoplasmic portion of the chain corresponds to 6148-6298; it reads LHNQTCCPMK…RRIPIADTHL (151 aa). 2 disordered regions span residues 6206–6242 and 6264–6283; these read ERSS…GSLI and SVSD…LTDS. Polar residues-rich tracts occupy residues 6208 to 6226 and 6265 to 6283; these read SSFQ…SPQN and VSDN…LTDS.

This sequence belongs to the G-protein coupled receptor 2 family. Adhesion G-protein coupled receptor (ADGR) subfamily. As to quaternary structure, forms a heterodimer, consisting of a large extracellular region (alpha subunit) non-covalently linked to a seven-transmembrane moiety (beta subunit). Interacts (via the cytoplasmic region) with PDZD7. Component of USH2 complex, composed of ADGRV1, PDZD7, USH2A and WHRN. Interacts with USH2A and WHRN. Interacts (via the cytoplasmic region) with MYO7A (via MyTH4-FERM domains). Autoproteolytically cleaved into 2 subunits, an extracellular alpha subunit and a seven-transmembrane subunit. Expressed by oligodendrocytes. In midbrain, enriched in the myelinated regions of the superior and inferior colliculi. In the cochlea, expressed in developing hair cells. Expressed by photoreceptors in the retina.

The protein resides in the cell membrane. The protein localises to the cell projection. Its subcellular location is the stereocilium membrane. It localises to the photoreceptor inner segment. It is found in the secreted. G-protein coupled receptor which has an essential role in the development of hearing and vision. Couples to G-alpha(i)-proteins, GNAI1/2/3, G-alpha(q)-proteins, GNAQ, as well as G-alpha(s)-proteins, GNAS, inhibiting adenylate cyclase (AC) activity and cAMP production. Required for the hair bundle ankle formation, which connects growing stereocilia in developing cochlear hair cells of the inner ear. In response to extracellular calcium, activates kinases PKA and PKC to regulate myelination by inhibiting the ubiquitination of MAG, thus enhancing the stability of this protein in myelin-forming cells of the auditory pathway. In retina photoreceptors, the USH2 complex is required for the maintenance of periciliary membrane complex that seems to play a role in regulating intracellular protein transport. Involved in the regulation of bone metabolism. Functionally, cleaved ADGRV1 beta-subunit couples with G-alpha(i)-proteins, GNAI1/2/3, and constitutively inhibits adenylate cyclase (AC) activity with a stronger effect than full ADGRV1. This Mus musculus (Mouse) protein is Adhesion G-protein coupled receptor V1.